The primary structure comprises 459 residues: Tubulin gamma chain (459 aa).

142–148 (AGGTGSG) contributes to the GTP binding site. The segment at 440–459 (ADYLTKETAPTDEAEDKRAG) is disordered.

Belongs to the tubulin family.

Its subcellular location is the cytoplasm. It localises to the cytoskeleton. It is found in the microtubule organizing center. The protein localises to the spindle pole body. In terms of biological role, tubulin is the major constituent of microtubules. The gamma chain is found at microtubule organizing centers (MTOC) such as the spindle poles or the centrosome, suggesting that it is involved in the minus-end nucleation of microtubule assembly. This chain is Tubulin gamma chain (TUB4), found in Cochliobolus heterostrophus (strain C5 / ATCC 48332 / race O) (Southern corn leaf blight fungus).